The following is a 784-amino-acid chain: Kinesin-like protein Klp68D (784 aa).

The Kinesin motor domain maps to 19–344; the sequence is CVQVVVRCRP…LRYASRAKSI (326 aa). ATP is bound at residue 106–113; sequence GQTGTGKT. Residues 351–385 are a coiled coil; sequence NEDPQDAKLKEYQEEIERLKRLIGPQQQQRSEKQV. Disordered regions lie at residues 371–449, 605–652, and 742–784; these read RLIG…ERER, KFSS…PSSL, and IKSS…LVNK. Residues 386–396 show a composition bias toward basic residues; the sequence is TAKKQRVKKPK. A compositionally biased stretch (acidic residues) spans 416 to 428; the sequence is PVEDDSDPEGAES. Residues 426–582 adopt a coiled-coil conformation; the sequence is AESESDKENE…KRQLLIIDNF (157 aa). Over residues 429–449 the composition is skewed to basic and acidic residues; sequence ESDKENEAEVAKSNEELERER. Positions 622–634 are enriched in basic residues; the sequence is SSKRPVSHPQRRR. Over residues 769-778 the composition is skewed to low complexity; the sequence is KKPASAYPKA.

Belongs to the TRAFAC class myosin-kinesin ATPase superfamily. Kinesin family. Kinesin II subfamily. In terms of tissue distribution, expressed primarily in the central nervous system and in a subset of the peripheral nervous system during embryogenesis.

The protein resides in the cytoplasm. Its subcellular location is the cytoskeleton. Its function is as follows. Plus-end directed microtubule motor that may be used for anterograde axonal transport and could conceivably move cargos in fly neurons different than those moved by kinesin heavy chain or other plus-end directed motors. The chain is Kinesin-like protein Klp68D (Klp68D) from Drosophila melanogaster (Fruit fly).